The primary structure comprises 245 residues: Biosynthetic peptidoglycan transglycosylase (245 aa).

A helical membrane pass occupies residues 29–49; it reads IVLAVLIVLILPYALIVFYLL.

It belongs to the glycosyltransferase 51 family.

It localises to the cell inner membrane. The catalysed reaction is [GlcNAc-(1-&gt;4)-Mur2Ac(oyl-L-Ala-gamma-D-Glu-L-Lys-D-Ala-D-Ala)](n)-di-trans,octa-cis-undecaprenyl diphosphate + beta-D-GlcNAc-(1-&gt;4)-Mur2Ac(oyl-L-Ala-gamma-D-Glu-L-Lys-D-Ala-D-Ala)-di-trans,octa-cis-undecaprenyl diphosphate = [GlcNAc-(1-&gt;4)-Mur2Ac(oyl-L-Ala-gamma-D-Glu-L-Lys-D-Ala-D-Ala)](n+1)-di-trans,octa-cis-undecaprenyl diphosphate + di-trans,octa-cis-undecaprenyl diphosphate + H(+). Its pathway is cell wall biogenesis; peptidoglycan biosynthesis. Its function is as follows. Peptidoglycan polymerase that catalyzes glycan chain elongation from lipid-linked precursors. The sequence is that of Biosynthetic peptidoglycan transglycosylase from Rhizobium johnstonii (strain DSM 114642 / LMG 32736 / 3841) (Rhizobium leguminosarum bv. viciae).